The sequence spans 282 residues: 4-hydroxy-3-methylbut-2-enyl diphosphate reductase (282 aa).

Position 14 (cysteine 14) interacts with [4Fe-4S] cluster. (2E)-4-hydroxy-3-methylbut-2-enyl diphosphate is bound by residues histidine 43 and histidine 78. Dimethylallyl diphosphate contacts are provided by histidine 43 and histidine 78. Isopentenyl diphosphate contacts are provided by histidine 43 and histidine 78. [4Fe-4S] cluster is bound at residue cysteine 100. Residue histidine 128 coordinates (2E)-4-hydroxy-3-methylbut-2-enyl diphosphate. Residue histidine 128 participates in dimethylallyl diphosphate binding. Position 128 (histidine 128) interacts with isopentenyl diphosphate. Glutamate 130 serves as the catalytic Proton donor. Threonine 164 is a (2E)-4-hydroxy-3-methylbut-2-enyl diphosphate binding site. [4Fe-4S] cluster is bound at residue cysteine 192. 4 residues coordinate (2E)-4-hydroxy-3-methylbut-2-enyl diphosphate: serine 220, serine 221, asparagine 222, and serine 266. Residues serine 220, serine 221, asparagine 222, and serine 266 each contribute to the dimethylallyl diphosphate site. Serine 220, serine 221, asparagine 222, and serine 266 together coordinate isopentenyl diphosphate.

The protein belongs to the IspH family. [4Fe-4S] cluster is required as a cofactor.

The catalysed reaction is isopentenyl diphosphate + 2 oxidized [2Fe-2S]-[ferredoxin] + H2O = (2E)-4-hydroxy-3-methylbut-2-enyl diphosphate + 2 reduced [2Fe-2S]-[ferredoxin] + 2 H(+). The enzyme catalyses dimethylallyl diphosphate + 2 oxidized [2Fe-2S]-[ferredoxin] + H2O = (2E)-4-hydroxy-3-methylbut-2-enyl diphosphate + 2 reduced [2Fe-2S]-[ferredoxin] + 2 H(+). It participates in isoprenoid biosynthesis; dimethylallyl diphosphate biosynthesis; dimethylallyl diphosphate from (2E)-4-hydroxy-3-methylbutenyl diphosphate: step 1/1. It functions in the pathway isoprenoid biosynthesis; isopentenyl diphosphate biosynthesis via DXP pathway; isopentenyl diphosphate from 1-deoxy-D-xylulose 5-phosphate: step 6/6. Its function is as follows. Catalyzes the conversion of 1-hydroxy-2-methyl-2-(E)-butenyl 4-diphosphate (HMBPP) into a mixture of isopentenyl diphosphate (IPP) and dimethylallyl diphosphate (DMAPP). Acts in the terminal step of the DOXP/MEP pathway for isoprenoid precursor biosynthesis. The sequence is that of 4-hydroxy-3-methylbut-2-enyl diphosphate reductase from Clostridium perfringens (strain SM101 / Type A).